A 191-amino-acid polypeptide reads, in one-letter code: Thymidine kinase (191 aa).

ATP is bound by residues 15–22 (GPMYSGKT) and 88–91 (DEAQ). The active-site Proton acceptor is E89. Zn(2+) contacts are provided by C145, C148, C183, and C186.

Belongs to the thymidine kinase family. Homotetramer.

Its subcellular location is the cytoplasm. The enzyme catalyses thymidine + ATP = dTMP + ADP + H(+). The polypeptide is Thymidine kinase (Clostridium botulinum (strain Loch Maree / Type A3)).